Here is a 196-residue protein sequence, read N- to C-terminus: Putative 3-methyladenine DNA glycosylase (196 aa).

The protein belongs to the DNA glycosylase MPG family.

This chain is Putative 3-methyladenine DNA glycosylase, found in Chlamydia pneumoniae (Chlamydophila pneumoniae).